The chain runs to 411 residues: Methylthioribose-1-phosphate isomerase (411 aa).

Serine 2 carries the post-translational modification N-acetylserine. The active-site Proton donor is aspartate 280. Serine 351 carries the phosphoserine modification.

This sequence belongs to the eIF-2B alpha/beta/delta subunits family. MtnA subfamily. Homodimer.

The protein resides in the cytoplasm. It is found in the nucleus. The catalysed reaction is 5-(methylsulfanyl)-alpha-D-ribose 1-phosphate = 5-(methylsulfanyl)-D-ribulose 1-phosphate. It participates in amino-acid biosynthesis; L-methionine biosynthesis via salvage pathway; L-methionine from S-methyl-5-thio-alpha-D-ribose 1-phosphate: step 1/6. In terms of biological role, catalyzes the interconversion of methylthioribose-1-phosphate (MTR-1-P) into methylthioribulose-1-phosphate (MTRu-1-P). This Saccharomyces cerevisiae (strain RM11-1a) (Baker's yeast) protein is Methylthioribose-1-phosphate isomerase.